Reading from the N-terminus, the 90-residue chain is Small ribosomal subunit protein bS20 (90 aa).

Over residues 1 to 10 (MANHKSTQKS) the composition is skewed to polar residues. The disordered stretch occupies residues 1–25 (MANHKSTQKSIRQDQKRNLINKSRK).

The protein belongs to the bacterial ribosomal protein bS20 family.

Binds directly to 16S ribosomal RNA. This chain is Small ribosomal subunit protein bS20, found in Orientia tsutsugamushi (strain Boryong) (Rickettsia tsutsugamushi).